The following is a 498-amino-acid chain: ATP synthase subunit beta, chloroplastic (498 aa).

172 to 179 (GGAGVGKT) serves as a coordination point for ATP.

It belongs to the ATPase alpha/beta chains family. F-type ATPases have 2 components, CF(1) - the catalytic core - and CF(0) - the membrane proton channel. CF(1) has five subunits: alpha(3), beta(3), gamma(1), delta(1), epsilon(1). CF(0) has four main subunits: a(1), b(1), b'(1) and c(9-12).

Its subcellular location is the plastid. It localises to the chloroplast thylakoid membrane. The catalysed reaction is ATP + H2O + 4 H(+)(in) = ADP + phosphate + 5 H(+)(out). In terms of biological role, produces ATP from ADP in the presence of a proton gradient across the membrane. The catalytic sites are hosted primarily by the beta subunits. The chain is ATP synthase subunit beta, chloroplastic from Nypa fruticans (Nypa palm).